The primary structure comprises 118 residues: MTSYTFTRELRLLTPAQFKSVFSNPIKASSAEITLLAIPNSEQHPRLGLTVAKRYVKRANQRNRIKRVIRDSFRLNQHNIPHLDIVVLVRNGVMEMENAELNKLIEKLWRKLSRRYNG.

It belongs to the RnpA family. Consists of a catalytic RNA component (M1 or rnpB) and a protein subunit.

The enzyme catalyses Endonucleolytic cleavage of RNA, removing 5'-extranucleotides from tRNA precursor.. RNaseP catalyzes the removal of the 5'-leader sequence from pre-tRNA to produce the mature 5'-terminus. It can also cleave other RNA substrates such as 4.5S RNA. The protein component plays an auxiliary but essential role in vivo by binding to the 5'-leader sequence and broadening the substrate specificity of the ribozyme. The sequence is that of Ribonuclease P protein component from Shewanella oneidensis (strain ATCC 700550 / JCM 31522 / CIP 106686 / LMG 19005 / NCIMB 14063 / MR-1).